The sequence spans 1050 residues: Antibiotic efflux pump membrane transporter ArpB (1050 aa).

12 helical membrane passes run I10 to L30, G339 to L359, M370 to I390, L393 to V413, G440 to G460, I472 to L492, V539 to I559, M871 to E891, W893 to A913, V923 to I943, I972 to A992, and V1004 to V1024.

Belongs to the resistance-nodulation-cell division (RND) (TC 2.A.6) family.

It localises to the cell inner membrane. Functionally, the inner membrane transporter component of an antibiotic efflux pump. Confers resistance to numerous structurally unrelated antibiotics such as carbenicillin, chloramphenicol, erythromycin, novobiocin, streptomycin and tetracycline. Is not involved in organic solvent efflux. The polypeptide is Antibiotic efflux pump membrane transporter ArpB (arpB) (Pseudomonas putida (Arthrobacter siderocapsulatus)).